A 495-amino-acid chain; its full sequence is Cobyric acid synthase (495 aa).

The 170-residue stretch at 258–427 (GLRVAAVRLP…WHGLFDNDGF (170 aa)) folds into the GATase cobBQ-type domain. Residue Cys-339 is the Nucleophile of the active site. The active site involves His-419.

It belongs to the CobB/CobQ family. CobQ subfamily.

Its pathway is cofactor biosynthesis; adenosylcobalamin biosynthesis. In terms of biological role, catalyzes amidations at positions B, D, E, and G on adenosylcobyrinic A,C-diamide. NH(2) groups are provided by glutamine, and one molecule of ATP is hydrogenolyzed for each amidation. The sequence is that of Cobyric acid synthase from Mycobacterium sp. (strain KMS).